Here is a 141-residue protein sequence, read N- to C-terminus: HTH-type transcriptional repressor NsrR (141 aa).

An HTH rrf2-type domain is found at 2-129 (QLTSFTDYGL…DQYTLADMVK (128 aa)). Positions 28–51 (ISEVTEVYGVSRNHMVKIINQLSR) form a DNA-binding region, H-T-H motif. [2Fe-2S] cluster is bound by residues C91, C96, and C102.

Requires [2Fe-2S] cluster as cofactor.

Its function is as follows. Nitric oxide-sensitive repressor of genes involved in protecting the cell against nitrosative stress. May require iron for activity. The chain is HTH-type transcriptional repressor NsrR from Pectobacterium atrosepticum (strain SCRI 1043 / ATCC BAA-672) (Erwinia carotovora subsp. atroseptica).